The chain runs to 944 residues: Breast cancer type 2 susceptibility protein homolog (944 aa).

Composition is skewed to basic and acidic residues over residues 325–348 (KKVKLEPSSQKEQKSSKDSNESKI) and 415–431 (NSIKRNDEEQPEKETPN). 2 disordered regions span residues 325–354 (KKVKLEPSSQKEQKSSKDSNESKIRAASCD) and 415–440 (NSIKRNDEEQPEKETPNKSRSTSSHQ). BRCA2 repeat units lie at residues 543-577 (AEPEFCGFRTASNKAIPISEKMKIKTAEFMAEFQS), 644-678 (NESQFFGFRTASNKAIEITEAMEKRGAMFLAQSRA), and 719-753 (SETEFFGFRTASNKGIVISENTKKKVAQFMSEFQA). Disordered regions lie at residues 823–854 (LCSQPLVRTPRRSQEIHSSLSQLAGQSPLDQA) and 876–944 (SSTE…RSRY). Composition is skewed to polar residues over residues 838 to 852 (IHSSLSQLAGQSPLD) and 876 to 885 (SSTETSTSCA). The segment covering 904–921 (ADRDLNRSKDCAKNRQDA) has biased composition (basic and acidic residues). Residues 932-944 (KKSRRLGLSRSRY) show a composition bias toward basic residues.

Interacts with Rad9 and spn-A/Rad51.

It localises to the nucleus. Functionally, involved in and required for double-strand break repair by meiotic and mitotic homologous recombination. During meiosis, has a dual role in the repair of meiotic double-stranded breaks and the efficient activation of the meiotic recombination checkpoint. The sequence is that of Breast cancer type 2 susceptibility protein homolog from Drosophila simulans (Fruit fly).